A 164-amino-acid polypeptide reads, in one-letter code: Low molecular weight protein-tyrosine-phosphatase (164 aa).

C9 (nucleophile) is an active-site residue. Residue R15 is part of the active site. D128 serves as the catalytic Proton donor.

The protein belongs to the low molecular weight phosphotyrosine protein phosphatase family.

It carries out the reaction O-phospho-L-tyrosyl-[protein] + H2O = L-tyrosyl-[protein] + phosphate. Acts on tyrosine phosphorylated proteins, low-MW aryl phosphates and natural and synthetic acyl phosphates. May be involved in the regulation of sulfur amino acid metabolism. This is Low molecular weight protein-tyrosine-phosphatase (ptpA) from Streptomyces coelicolor (strain ATCC BAA-471 / A3(2) / M145).